We begin with the raw amino-acid sequence, 834 residues long: WPP domain-associated protein (834 aa).

Coiled coils occupy residues 410–456 (SFGN…RLQH), 574–700 (SLDT…VLAI), and 792–812 (AEAE…LVEK).

Interacts with MAF1. In terms of tissue distribution, expressed in seedlings, leaves and fruits.

It is found in the golgi apparatus. The protein resides in the cytoplasm. The polypeptide is WPP domain-associated protein (WAP) (Solanum lycopersicum (Tomato)).